The sequence spans 131 residues: ATP synthase epsilon chain, chloroplastic (131 aa).

This sequence belongs to the ATPase epsilon chain family. As to quaternary structure, F-type ATPases have 2 components, CF(1) - the catalytic core - and CF(0) - the membrane proton channel. CF(1) has five subunits: alpha(3), beta(3), gamma(1), delta(1), epsilon(1). CF(0) has three main subunits: a, b and c.

It is found in the plastid. The protein resides in the chloroplast thylakoid membrane. Produces ATP from ADP in the presence of a proton gradient across the membrane. The polypeptide is ATP synthase epsilon chain, chloroplastic (Oltmannsiellopsis viridis (Marine flagellate)).